We begin with the raw amino-acid sequence, 452 residues long: Phosphoglucosamine mutase (452 aa).

The active-site Phosphoserine intermediate is the Ser-104. Positions 104, 246, 248, and 250 each coordinate Mg(2+). Position 104 is a phosphoserine (Ser-104).

It belongs to the phosphohexose mutase family. Requires Mg(2+) as cofactor. In terms of processing, activated by phosphorylation.

The enzyme catalyses alpha-D-glucosamine 1-phosphate = D-glucosamine 6-phosphate. Catalyzes the conversion of glucosamine-6-phosphate to glucosamine-1-phosphate. The sequence is that of Phosphoglucosamine mutase from Streptomyces coelicolor (strain ATCC BAA-471 / A3(2) / M145).